A 376-amino-acid polypeptide reads, in one-letter code: Erythronate-4-phosphate dehydrogenase (376 aa).

The substrate site is built by Ser45 and Thr67. Residues 127 to 128 (QV), Asp147, and Thr176 each bind NAD(+). The active site involves Arg209. Position 233 (Asp233) interacts with NAD(+). Residue Glu238 is part of the active site. His255 (proton donor) is an active-site residue. An NAD(+)-binding site is contributed by Gly258. Position 259 (Tyr259) interacts with substrate.

Belongs to the D-isomer specific 2-hydroxyacid dehydrogenase family. PdxB subfamily. As to quaternary structure, homodimer.

It is found in the cytoplasm. It carries out the reaction 4-phospho-D-erythronate + NAD(+) = (R)-3-hydroxy-2-oxo-4-phosphooxybutanoate + NADH + H(+). It functions in the pathway cofactor biosynthesis; pyridoxine 5'-phosphate biosynthesis; pyridoxine 5'-phosphate from D-erythrose 4-phosphate: step 2/5. In terms of biological role, catalyzes the oxidation of erythronate-4-phosphate to 3-hydroxy-2-oxo-4-phosphonooxybutanoate. This chain is Erythronate-4-phosphate dehydrogenase, found in Aliivibrio salmonicida (strain LFI1238) (Vibrio salmonicida (strain LFI1238)).